Reading from the N-terminus, the 706-residue chain is Signal transducer and activator of transcription 1 (706 aa).

The SH2 domain maps to 477 to 574 (WCIGFISKND…EEMLRFFESE (98 aa)).

Belongs to the transcription factor STAT family. Forms a homodimer or a heterodimer with a related family member. As to expression, expressed in adult and larval pharynx, head ganglia, tail ganglia, ventral nerve cord and body muscles.

Its subcellular location is the cytoplasm. The protein resides in the nucleus. In terms of biological role, carries out a dual function: signal transduction and activation of transcription. Activated STAT proteins play a role in repression of dauer formation. Neuronal expression is held in check by negative signals through the TGF-beta pathway that target the daf-3 transcription factor. The protein is Signal transducer and activator of transcription 1 of Caenorhabditis elegans.